The following is a 1917-amino-acid chain: Diacylglycerol kinase eta (1917 aa).

The segment covering 1 to 10 (MSHLKLDTLH) has biased composition (basic and acidic residues). Residues 1–37 (MSHLKLDTLHVQRSPRGSRRSSRSSGRSSACSSGSIS) form a disordered region. Over residues 23 to 37 (RSSGRSSACSSGSIS) the composition is skewed to low complexity. Residues 82-175 (AIIKEGFLLK…WLGSLKTATA (94 aa)) form the PH domain. 2 consecutive Phorbol-ester/DAG-type zinc fingers follow at residues 195-245 (HHHW…IANC) and 268-319 (PHQW…AVAC). One can recognise a DAGKc domain in the interval 350–486 (GNFSPLLVFV…DRWSIMVFEK (137 aa)). Disordered stretches follow at residues 1015–1053 (TTLC…PPRI), 1114–1149 (LEQQ…SEDE), and 1380–1399 (KDKD…EETN). The span at 1128-1145 (PEQQQTPTNKGPNSLATT) shows a compositional bias: polar residues. The region spanning 1854–1917 (WSVNEVVTWL…LQAIKDLSEN (64 aa)) is the SAM domain.

This sequence belongs to the eukaryotic diacylglycerol kinase family.

Its subcellular location is the cytoplasm. The enzyme catalyses a 1,2-diacyl-sn-glycerol + ATP = a 1,2-diacyl-sn-glycero-3-phosphate + ADP + H(+). Its function is as follows. Phosphorylates diacylglycerol (DAG) to generate phosphatidic acid (PA). This is Diacylglycerol kinase eta from Drosophila yakuba (Fruit fly).